The primary structure comprises 21 residues: Major outer membrane protein P44 (21 aa).

Monomer.

It is found in the cell outer membrane. The chain is Major outer membrane protein P44 from Mannheimia haemolytica (Pasteurella haemolytica).